Here is a 103-residue protein sequence, read N- to C-terminus: Small ribosomal subunit protein uS14c (103 aa).

A disordered region spans residues 34–56; the sequence is KVSPLSLSEKTKMQEKLQSLPRN.

The protein belongs to the universal ribosomal protein uS14 family. In terms of assembly, part of the 30S ribosomal subunit.

The protein localises to the plastid. It localises to the chloroplast. Functionally, binds 16S rRNA, required for the assembly of 30S particles. The chain is Small ribosomal subunit protein uS14c from Saccharum hybrid (Sugarcane).